Here is a 410-residue protein sequence, read N- to C-terminus: Demethyl-4-deoxygadusol synthase (410 aa).

NAD(+) is bound by residues 56 to 58 (DAN), 87 to 90 (EPDK), 119 to 123 (GLITD), 143 to 144 (TT), K156, K165, and 183 to 186 (LLRT). Residues E198, H271, and H287 each contribute to the Zn(2+) site.

The protein belongs to the sugar phosphate cyclases superfamily. DDGS family. Homodimer. Requires NAD(+) as cofactor. It depends on Co(2+) as a cofactor. Zn(2+) is required as a cofactor.

It catalyses the reaction D-sedoheptulose 7-phosphate = (R)-demethyl-4-deoxygadusol + phosphate + H2O + H(+). Its function is as follows. Catalyzes the conversion of sedoheptulose 7-phosphate to demethyl-4-deoxygadusol (DDG). Involved in the synthesis of the mycosporine-like amino acid shinorine, a natural sunscreen compound that protects the cell against UV radiation. This Trichormus variabilis (strain ATCC 29413 / PCC 7937) (Anabaena variabilis) protein is Demethyl-4-deoxygadusol synthase.